Reading from the N-terminus, the 463-residue chain is Perilipin-5 (463 aa).

The interaction with LIPE stretch occupies residues 1 to 108 (MSEEEAAQIP…KLEEKLPFLQ (108 aa)). The interval 1 to 173 (MSEEEAAQIP…HFLPMTEEEL (173 aa)) is essential for lipid droplet targeting. 3 positions are modified to phosphoserine: Ser-2, Ser-148, and Ser-322. The segment at 185–463 (VGSVEDQRRQ…KHTLMPELDF (279 aa)) is interaction with PNPLA2 and ABHD5. The tract at residues 444–463 (QEPETPSCPVKHTLMPELDF) is recruits mitochondria at the lipid droplet surface.

The protein belongs to the perilipin family. Homooligomer. Interacts with PNPLA2; prevents interaction of PNPLA2 with ABHD5. Interacts with ABHD5; targets ABHD5 to lipid droplets and promotes interaction of ABHD5 with PNPLA2. Interacts with LIPE. Phosphorylated by PKA. Phosphorylated on serine in skeletal muscle at rest or upon lipolytic stimulation. In terms of tissue distribution, expressed in skeletal muscle, liver, heart and kidney.

It is found in the lipid droplet. It localises to the cytoplasm. Its subcellular location is the mitochondrion. Lipid droplet-associated protein that maintains the balance between lipogenesis and lipolysis and also regulates fatty acid oxidation in oxidative tissues. Recruits mitochondria to the surface of lipid droplets and is involved in lipid droplet homeostasis by regulating both the storage of fatty acids in the form of triglycerides and the release of fatty acids for mitochondrial fatty acid oxidation. In lipid droplet triacylglycerol hydrolysis, plays a role as a scaffolding protein for three major key lipolytic players: ABHD5, PNPLA2 and LIPE. Reduces the triacylglycerol hydrolase activity of PNPLA2 by recruiting and sequestering PNPLA2 to lipid droplets. Phosphorylation by PKA enables lipolysis probably by promoting release of ABHD5 from the perilipin scaffold and by facilitating interaction of ABHD5 with PNPLA2. Also increases lipolysis through interaction with LIPE and upon PKA-mediated phosphorylation of LIPE. The polypeptide is Perilipin-5 (PLIN5) (Homo sapiens (Human)).